A 289-amino-acid chain; its full sequence is MKLRLGLPKGSLQEATFQLFKQAGFELTVRSRSYFPSVNDPELEVVLMRAQEIPRYVHEGVLDAGLSGLDWILENEADVVEVADLVYAKSTPNPIRLVIAVANDSNIKSVSDLNGKRIATELVRVTQKFLRENGVNAYVEYSYGATEVKVPHLVDAIADITETGSSLKANNLRVIATILESTTKLHANKESWNDPWKREKLQNLAVLLQGALRARARVGLKMNVPGDRLDTILAILPAMKQPTISQLVNSDWVAVEVILEERQVRDLIPALKRAGAHDIIEYPLTKVIP.

It belongs to the ATP phosphoribosyltransferase family. Long subfamily. Requires Mg(2+) as cofactor.

The protein resides in the cytoplasm. The enzyme catalyses 1-(5-phospho-beta-D-ribosyl)-ATP + diphosphate = 5-phospho-alpha-D-ribose 1-diphosphate + ATP. Its pathway is amino-acid biosynthesis; L-histidine biosynthesis; L-histidine from 5-phospho-alpha-D-ribose 1-diphosphate: step 1/9. Feedback inhibited by histidine. Functionally, catalyzes the condensation of ATP and 5-phosphoribose 1-diphosphate to form N'-(5'-phosphoribosyl)-ATP (PR-ATP). Has a crucial role in the pathway because the rate of histidine biosynthesis seems to be controlled primarily by regulation of HisG enzymatic activity. In Pelotomaculum thermopropionicum (strain DSM 13744 / JCM 10971 / SI), this protein is ATP phosphoribosyltransferase.